Consider the following 504-residue polypeptide: D-alanine--D-alanyl carrier protein ligase (504 aa).

An ATP-binding site is contributed by 152 to 153 (TS). Asp-197 contributes to the D-alanine binding site. An ATP-binding site is contributed by 292–297 (NTYGPT). Val-301 provides a ligand contact to D-alanine. ATP is bound by residues Asp-383, 394–397 (YNGR), and Lys-492. Residue Lys-492 coordinates D-alanine.

The protein belongs to the ATP-dependent AMP-binding enzyme family. DltA subfamily.

The protein localises to the cytoplasm. It catalyses the reaction holo-[D-alanyl-carrier protein] + D-alanine + ATP = D-alanyl-[D-alanyl-carrier protein] + AMP + diphosphate. It participates in cell wall biogenesis; lipoteichoic acid biosynthesis. Its function is as follows. Catalyzes the first step in the D-alanylation of lipoteichoic acid (LTA), the activation of D-alanine and its transfer onto the D-alanyl carrier protein (Dcp) DltC. In an ATP-dependent two-step reaction, forms a high energy D-alanyl-AMP intermediate, followed by transfer of the D-alanyl residue as a thiol ester to the phosphopantheinyl prosthetic group of the Dcp. D-alanylation of LTA plays an important role in modulating the properties of the cell wall in Gram-positive bacteria, influencing the net charge of the cell wall. The chain is D-alanine--D-alanyl carrier protein ligase from Bacillus cereus (strain AH187).